A 334-amino-acid chain; its full sequence is N-acetyl-gamma-glutamyl-phosphate reductase (334 aa).

Cysteine 154 is an active-site residue.

The protein belongs to the NAGSA dehydrogenase family. Type 1 subfamily.

It localises to the cytoplasm. It catalyses the reaction N-acetyl-L-glutamate 5-semialdehyde + phosphate + NADP(+) = N-acetyl-L-glutamyl 5-phosphate + NADPH + H(+). It participates in amino-acid biosynthesis; L-arginine biosynthesis; N(2)-acetyl-L-ornithine from L-glutamate: step 3/4. Catalyzes the NADPH-dependent reduction of N-acetyl-5-glutamyl phosphate to yield N-acetyl-L-glutamate 5-semialdehyde. The chain is N-acetyl-gamma-glutamyl-phosphate reductase from Salmonella typhimurium (strain LT2 / SGSC1412 / ATCC 700720).